The chain runs to 441 residues: UBX domain-containing protein 6 (441 aa).

The mediates interaction with LMAN1 stretch occupies residues 1–10 (MKKFFQEIKA). Disordered stretches follow at residues 12-57 (IKFK…MAAA), 62-81 (RLEQ…SIRN), and 86-113 (ELRA…EEGS). A compositionally biased stretch (basic and acidic residues) spans 27–36 (VGEKAPKEKP). The tract at residues 51 to 63 (EAQMAAAAALARL) is VCP/p97-interacting motif (VIM). Residues 175–244 (VDTIAKYLDN…GPEEFYVLSE (70 aa)) enclose the PUB domain. A UBX domain is found at 332 to 408 (RKYTYTLLRV…GLVPSALLTF (77 aa)).

Interacts with VCP through the PUB domain (via C-terminus) and VIM motif (via N-terminus); the interaction is direct. Forms a ternary complex with CAV1 and VCP. Interacts with SYVN1. Interacts with HERPUD1. Interacts with VCPKMT. May interact with DERL1. Interacts with PLAA, VCP and YOD1; may form a complex involved in macroautophagy. Interacts with LMAN1.

It localises to the cytoplasm. The protein localises to the cytosol. It is found in the membrane. The protein resides in the nucleus. Its subcellular location is the cytoskeleton. It localises to the microtubule organizing center. The protein localises to the centrosome. It is found in the early endosome membrane. The protein resides in the late endosome membrane. Its subcellular location is the lysosome membrane. May negatively regulate the ATPase activity of VCP, an ATP-driven segregase that associates with different cofactors to control a wide variety of cellular processes. As a cofactor of VCP, it may play a role in the transport of CAV1 to lysosomes for degradation. It may also play a role in endoplasmic reticulum-associated degradation (ERAD) of misfolded proteins. Together with VCP and other cofactors, it may play a role in macroautophagy, regulating for instance the clearance of damaged lysosomes. The protein is UBX domain-containing protein 6 of Bos taurus (Bovine).